The sequence spans 413 residues: Serine hydroxymethyltransferase (413 aa).

(6S)-5,6,7,8-tetrahydrofolate is bound by residues Leu119 and 123 to 125 (GHL). At Lys228 the chain carries N6-(pyridoxal phosphate)lysine.

This sequence belongs to the SHMT family. As to quaternary structure, homodimer. Requires pyridoxal 5'-phosphate as cofactor.

It is found in the cytoplasm. It catalyses the reaction (6R)-5,10-methylene-5,6,7,8-tetrahydrofolate + glycine + H2O = (6S)-5,6,7,8-tetrahydrofolate + L-serine. It participates in one-carbon metabolism; tetrahydrofolate interconversion. Its pathway is amino-acid biosynthesis; glycine biosynthesis; glycine from L-serine: step 1/1. In terms of biological role, catalyzes the reversible interconversion of serine and glycine with tetrahydrofolate (THF) serving as the one-carbon carrier. This reaction serves as the major source of one-carbon groups required for the biosynthesis of purines, thymidylate, methionine, and other important biomolecules. Also exhibits THF-independent aldolase activity toward beta-hydroxyamino acids, producing glycine and aldehydes, via a retro-aldol mechanism. This is Serine hydroxymethyltransferase from Caldanaerobacter subterraneus subsp. tengcongensis (strain DSM 15242 / JCM 11007 / NBRC 100824 / MB4) (Thermoanaerobacter tengcongensis).